A 117-amino-acid chain; its full sequence is Large ribosomal subunit protein uL18 (117 aa).

The protein belongs to the universal ribosomal protein uL18 family. In terms of assembly, part of the 50S ribosomal subunit; part of the 5S rRNA/L5/L18/L25 subcomplex. Contacts the 5S and 23S rRNAs.

This is one of the proteins that bind and probably mediate the attachment of the 5S RNA into the large ribosomal subunit, where it forms part of the central protuberance. The sequence is that of Large ribosomal subunit protein uL18 from Onion yellows phytoplasma (strain OY-M).